The following is a 362-amino-acid chain: Cobalt-precorrin-5B C(1)-methyltransferase (362 aa).

This sequence belongs to the CbiD family.

It catalyses the reaction Co-precorrin-5B + S-adenosyl-L-methionine = Co-precorrin-6A + S-adenosyl-L-homocysteine. The protein operates within cofactor biosynthesis; adenosylcobalamin biosynthesis; cob(II)yrinate a,c-diamide from sirohydrochlorin (anaerobic route): step 6/10. Its function is as follows. Catalyzes the methylation of C-1 in cobalt-precorrin-5B to form cobalt-precorrin-6A. The sequence is that of Cobalt-precorrin-5B C(1)-methyltransferase from Burkholderia cenocepacia (strain HI2424).